The primary structure comprises 427 residues: Acetyl-CoA acetyltransferase, mitochondrial (427 aa).

The N-terminal 33 residues, 1 to 33 (MAVLAALLRGGARSRSPLLRRLVQEIRYVERSY), are a transit peptide targeting the mitochondrion. At lysine 66 the chain carries N6-acetyllysine; alternate. Lysine 66 bears the N6-succinyllysine; alternate mark. At lysine 78 the chain carries N6-succinyllysine. Cysteine 126 acts as the Acyl-thioester intermediate in catalysis. Lysine 174, lysine 181, lysine 190, and lysine 202 each carry N6-acetyllysine; alternate. An N6-succinyllysine; alternate mark is found at lysine 174, lysine 181, lysine 190, and lysine 202. Tyrosine 219 provides a ligand contact to CoA. Residue tyrosine 219 participates in K(+) binding. Lysine 223 and lysine 230 each carry N6-acetyllysine; alternate. An N6-succinyllysine; alternate mark is found at lysine 223 and lysine 230. N6-succinyllysine is present on lysine 243. N6-acetyllysine occurs at positions 251 and 257. CoA is bound by residues 258–260 (RVD) and lysine 263. Position 263 is an N6-acetyllysine; alternate (lysine 263). At lysine 263 the chain carries N6-succinyllysine; alternate. An N6-succinyllysine mark is found at lysine 266 and lysine 268. At lysine 273 the chain carries N6-acetyllysine. Residues alanine 280, alanine 281, and alanine 283 each contribute to the K(+) site. Residue serine 284 coordinates CoA. An N6-acetyllysine modification is found at lysine 338. Valine 381 contributes to the K(+) binding site. Cysteine 413 functions as the Proton donor/acceptor in the catalytic mechanism.

This sequence belongs to the thiolase-like superfamily. Thiolase family. In terms of assembly, homotetramer. Succinylation at Lys-268, adjacent to a coenzyme A binding site. Desuccinylated by SIRT5.

Its subcellular location is the mitochondrion. It carries out the reaction 2 acetyl-CoA = acetoacetyl-CoA + CoA. It catalyses the reaction propanoyl-CoA + acetyl-CoA = 2-methyl-3-oxobutanoyl-CoA + CoA. It functions in the pathway lipid metabolism; fatty acid beta-oxidation. Activated by potassium ions, but not sodium ions. In terms of biological role, this is one of the enzymes that catalyzes the last step of the mitochondrial beta-oxidation pathway, an aerobic process breaking down fatty acids into acetyl-CoA. Using free coenzyme A/CoA, catalyzes the thiolytic cleavage of medium- to long-chain 3-oxoacyl-CoAs into acetyl-CoA and a fatty acyl-CoA shortened by two carbon atoms. The activity of the enzyme is reversible and it can also catalyze the condensation of two acetyl-CoA molecules into acetoacetyl-CoA. Thereby, it plays a major role in ketone body metabolism. The polypeptide is Acetyl-CoA acetyltransferase, mitochondrial (ACAT1) (Macaca fascicularis (Crab-eating macaque)).